A 333-amino-acid polypeptide reads, in one-letter code: uncharacterized protein (333 aa).

A Radical SAM core domain is found at His67–Glu274. The [4Fe-4S] cluster site is built by Cys82, Cys86, and Cys89.

Requires [4Fe-4S] cluster as cofactor.

This is an uncharacterized protein from Methanocaldococcus jannaschii (strain ATCC 43067 / DSM 2661 / JAL-1 / JCM 10045 / NBRC 100440) (Methanococcus jannaschii).